The chain runs to 387 residues: Eukaryotic translation initiation factor 3 subunit M (387 aa).

In terms of domain architecture, PCI spans 181-340 (LSSKVMIELL…RKVHISSTMH (160 aa)).

The protein belongs to the eIF-3 subunit M family. In terms of assembly, component of the eukaryotic translation initiation factor 3 (eIF-3) complex. The eIF-3 complex interacts with pix.

It is found in the cytoplasm. The protein localises to the golgi apparatus. Component of the eukaryotic translation initiation factor 3 (eIF-3) complex, which is involved in protein synthesis of a specialized repertoire of mRNAs and, together with other initiation factors, stimulates binding of mRNA and methionyl-tRNAi to the 40S ribosome. The eIF-3 complex specifically targets and initiates translation of a subset of mRNAs involved in cell proliferation. The sequence is that of Eukaryotic translation initiation factor 3 subunit M from Drosophila grimshawi (Hawaiian fruit fly).